A 117-amino-acid chain; its full sequence is Large ribosomal subunit protein bL20 (117 aa).

It belongs to the bacterial ribosomal protein bL20 family.

Binds directly to 23S ribosomal RNA and is necessary for the in vitro assembly process of the 50S ribosomal subunit. It is not involved in the protein synthesizing functions of that subunit. This chain is Large ribosomal subunit protein bL20, found in Pelobacter propionicus (strain DSM 2379 / NBRC 103807 / OttBd1).